The chain runs to 203 residues: Ras-related protein Rab-13 (203 aa).

7 residues coordinate GTP: Ser17, Gly18, Gly20, Lys21, Thr22, Cys23, and Thr40. Thr22 serves as a coordination point for Mg(2+). The Switch 1 signature appears at Asp31–Phe45. Thr40 contributes to the Mg(2+) binding site. Residues Lys46 and Lys58 each participate in a glycyl lysine isopeptide (Lys-Gly) (interchain with G-Cter in ubiquitin) cross-link. Mg(2+) is bound at residue Asp63. A Switch 2 motif is present at residues Asp63–Gly80. Residues Gly66, Asn121, Lys122, Asp124, Ala152, and Lys153 each contribute to the GTP site. Residues Ser173–Gly203 form a disordered region. The residue at position 178 (Ser178) is a Phosphoserine. Cys200 is subject to Cysteine methyl ester. Cys200 is lipidated: S-geranylgeranyl cysteine. Positions Ser201–Gly203 are cleaved as a propeptide — removed in mature form.

Belongs to the small GTPase superfamily. Rab family. In terms of assembly, interacts (GTP-bound form) with MICALL2; competes with RAB8A and is involved in tight junctions assembly. Interacts (GTP-bound form) with MICALL1. Interacts (GTP-bound form) with MICAL1, MICAL3, MICALCL, EHBP1 and EHBP1L1; ternary complexes of RAB8A, RAB13 and either MICAL1 or EHBP1L1 are possible. Interacts with PRKACA; downstream effector of RAB13 involved in tight junction assembly. Interacts with GRB2; may recruit RAB13 to the leading edge of migrating endothelial cells where it can activate RHOA. Interacts (isoprenylated form) with PDE6D; dissociates RAB13 from membranes. Interacts with BICDL2/BICDR2. Interacts with LEPROT and LEPROTL1. Mg(2+) serves as cofactor. Ubiquitinated via 'Lys-11'-linked ubiquitination on Lys-46 and Lys-58; impairing the recruitment of guanosine diphosphate (GDP) dissociation inhibitor 1/GDI1.

Its subcellular location is the cell membrane. It is found in the cytoplasmic vesicle membrane. The protein resides in the cell junction. It localises to the tight junction. The protein localises to the golgi apparatus. Its subcellular location is the trans-Golgi network membrane. It is found in the recycling endosome membrane. The protein resides in the cell projection. It localises to the lamellipodium. The enzyme catalyses GTP + H2O = GDP + phosphate + H(+). Regulated by guanine nucleotide exchange factors (GEFs) including DENND1C, which promote the exchange of bound GDP for free GTP. Regulated by GTPase activating proteins (GAPs) which increase the GTP hydrolysis activity. Inhibited by GDP dissociation inhibitors (GDIs). Activated in response to insulin. In terms of biological role, the small GTPases Rab are key regulators of intracellular membrane trafficking, from the formation of transport vesicles to their fusion with membranes. Rabs cycle between an inactive GDP-bound form and an active GTP-bound form that is able to recruit to membranes different sets of downstream effectors directly responsible for vesicle formation, movement, tethering and fusion. RAB13 is involved in endocytic recycling and regulates the transport to the plasma membrane of transmembrane proteins like the tight junction protein OCLN/occludin. Thereby, it regulates the assembly and the activity of tight junctions. Moreover, it may also regulate tight junction assembly by activating the PKA signaling pathway and by reorganizing the actin cytoskeleton through the activation of the downstream effectors PRKACA and MICALL2 respectively. Through its role in tight junction assembly, may play a role in the establishment of Sertoli cell barrier. Plays also a role in angiogenesis through regulation of endothelial cells chemotaxis. Also involved in neurite outgrowth. Has also been proposed to play a role in post-Golgi membrane trafficking from the TGN to the recycling endosome. Finally, it has been involved in insulin-induced transport to the plasma membrane of the glucose transporter GLUT4 and therefore may play a role in glucose homeostasis. This Mesocricetus auratus (Golden hamster) protein is Ras-related protein Rab-13 (RAB13).